Consider the following 296-residue polypeptide: N-acetylmuramic acid 6-phosphate etherase (296 aa).

An SIS domain is found at 54–217 (VIASFQQGGR…STTAMVGIGK (164 aa)). Residue glutamate 82 is the Proton donor of the active site. Glutamate 113 is a catalytic residue.

The protein belongs to the GCKR-like family. MurNAc-6-P etherase subfamily. Homodimer.

The catalysed reaction is N-acetyl-D-muramate 6-phosphate + H2O = N-acetyl-D-glucosamine 6-phosphate + (R)-lactate. The protein operates within amino-sugar metabolism; N-acetylmuramate degradation. In terms of biological role, specifically catalyzes the cleavage of the D-lactyl ether substituent of MurNAc 6-phosphate, producing GlcNAc 6-phosphate and D-lactate. This Shouchella clausii (strain KSM-K16) (Alkalihalobacillus clausii) protein is N-acetylmuramic acid 6-phosphate etherase.